Here is a 434-residue protein sequence, read N- to C-terminus: Enolase (434 aa).

The substrate site is built by histidine 158 and glutamate 167. Glutamate 210 serves as the catalytic Proton donor. Residues aspartate 245, glutamate 294, and aspartate 319 each contribute to the Mg(2+) site. The substrate site is built by glutamate 294 and aspartate 319. Lysine 344 serves as the catalytic Proton acceptor. Residues 371 to 374 and lysine 395 contribute to the substrate site; that span reads SHRS.

The protein belongs to the enolase family. As to quaternary structure, homodimer. The cofactor is Mg(2+).

It is found in the cytoplasm. The enzyme catalyses (2R)-2-phosphoglycerate = phosphoenolpyruvate + H2O. It functions in the pathway carbohydrate degradation; glycolysis; pyruvate from D-glyceraldehyde 3-phosphate: step 4/5. The chain is Enolase from Caenorhabditis elegans.